The primary structure comprises 475 residues: Glutamate--tRNA ligase 2 (475 aa).

The 'HIGH' region signature appears at 9–19 (PSPTGFLHIGS). The 'KMSKS' region signature appears at 238-242 (KLSKR). An ATP-binding site is contributed by Lys-241.

This sequence belongs to the class-I aminoacyl-tRNA synthetase family. Glutamate--tRNA ligase type 1 subfamily. In terms of assembly, monomer.

The protein localises to the cytoplasm. It catalyses the reaction tRNA(Glu) + L-glutamate + ATP = L-glutamyl-tRNA(Glu) + AMP + diphosphate. Its function is as follows. Catalyzes the attachment of glutamate to tRNA(Glu) in a two-step reaction: glutamate is first activated by ATP to form Glu-AMP and then transferred to the acceptor end of tRNA(Glu). In Bartonella quintana (strain Toulouse) (Rochalimaea quintana), this protein is Glutamate--tRNA ligase 2.